A 134-amino-acid chain; its full sequence is Beta-synuclein (134 aa).

Tandem repeats lie at residues Glu-20–Ala-30 and Glu-31–Gly-41. The tract at residues Glu-20 to Gly-67 is 4 X 11 AA tandem repeats of [EGS]-K-T-K-[EQ]-[GQ]-V-X(4). The 3; approximate repeat unit spans residues Ser-42–Ala-56. Copy 4 of the repeat occupies Glu-57–Gly-67. The disordered stretch occupies residues Glu-97–Ala-134. Residues Val-98–Ala-134 show a composition bias toward acidic residues. Ser-118 carries the post-translational modification Phosphoserine; by BARK1, CK2 and GRK5.

It belongs to the synuclein family. In terms of processing, phosphorylated. Phosphorylation by G-protein coupled receptor kinases (GRK) is more efficient than phosphorylation by CK1, CK2 and CaM-kinase II. In terms of tissue distribution, specifically present in synapses around neurons but not in glial cells.

Its subcellular location is the cytoplasm. May be involved in neuronal plasticity. This is Beta-synuclein (SNCB) from Bos taurus (Bovine).